Here is a 150-residue protein sequence, read N- to C-terminus: MEVILLEKVANLGDLGDRVKVRPGYGRNYLVPQGKAKPATKENIRYFEERRAELERQAQEALAAAEARKEQLEGLTVTISAKSGEEGKLFGSVGTQDVADAITAAGVEVARREVRMPEGPIRVTGEYELELGLHTDVTALVKVVVQSQEA.

Belongs to the bacterial ribosomal protein bL9 family.

In terms of biological role, binds to the 23S rRNA. The chain is Large ribosomal subunit protein bL9 from Alkalilimnicola ehrlichii (strain ATCC BAA-1101 / DSM 17681 / MLHE-1).